The chain runs to 443 residues: Transcriptional adapter 2-alpha (443 aa).

The residue at position 6 (Ser6) is a Phosphoserine. The segment at 12–69 (SDKPPCRGCSSYLTEPYIKCAECGPPPFFLCLQCFTRGFEYKKHQSDHTYEIMTSDFP) adopts a ZZ-type zinc-finger fold. Positions 17, 20, 31, 34, 42, 45, 55, and 59 each coordinate Zn(2+). One can recognise an SANT domain in the interval 70–122 (VLDPSWTAQEEMALLEAVMDCGFGNWQDVANQMCTKTKEECEKHYMKHFINNP). Residues Lys132 and Lys138 each participate in a glycyl lysine isopeptide (Lys-Gly) (interchain with G-Cter in SUMO2) cross-link. The region spanning 356–443 (NSGRRSAPPL…LIREGYITKA (88 aa)) is the SWIRM domain. A DNA-binding region spans residues 426-435 (KTRKIYDFLI).

In terms of assembly, interacts with GCN5. Interacts with NR3C1. Associated with the P/CAF protein in the PCAF complex. Component of the PCAF complex, at least composed of TADA2L/ADA2, TADA3L/ADA3, TAF5L/PAF65-beta, TAF6L/PAF65-alpha, TAF10/TAFII30, TAF12/TAFII20, TAF9/TAFII31 and TRRAP. Component of the ADA2A-containing complex (ATAC), composed of KAT14, KAT2A, TADA2L, TADA3L, ZZ3, MBIP, WDR5, YEATS2, CCDC101 and DR1. Interacts with CCDC134.

It localises to the nucleus. Its subcellular location is the chromosome. Functionally, component of the ATAC complex, a complex with histone acetyltransferase activity on histones H3 and H4. Required for the function of some acidic activation domains, which activate transcription from a distant site. Binds double-stranded DNA. Binds dinucleosomes, probably at the linker region between neighboring nucleosomes. Plays a role in chromatin remodeling. May promote TP53/p53 'Lys-321' acetylation, leading to reduced TP53 stability and transcriptional activity. May also promote XRCC6 acetylation thus facilitating cell apoptosis in response to DNA damage. The polypeptide is Transcriptional adapter 2-alpha (Tada2a) (Mus musculus (Mouse)).